Reading from the N-terminus, the 912-residue chain is MDDFNLRSENPNSSSTTSSSSSSFHRHKSETGNTKRSRSTSTLSTDPQSVAARDRRHRISDRFKILQSMVPGGAKMDTVSMLDEAISYVKFLKAQIWYHQNMLLFINDHETTSSCTYSPGAGEFGPKLFGYDDDYAPIMDTYSQGVPLTVADSKYTPWFGSVDDEQEHVTYFKYRRATRHALRGHCNCIIGETEEFADQREKMEVQIEESGKNQTSPESIEADKAKQIVVLLIGPPGSGKSTFCDTAMRSSHRPWSRICQDIVNNGKAGTKAQCLKMATDSLREGKSVFIDRCNLDREQRSEFIKLGGPEFEVHAVVLELPAQVCISRSVKRTGHEGNLQGGRAAAVVNKMLQSKELPKVNEGFSRIMFCYSDADVDNAVNMYNKLGPMDTLPSGCFGEKKLDTKSQPGIMKFFKKVSALPASSSNEATNTTRKADEMTANVRVSPVKLGSADIVPTLAFPSISTADFQFDLEKASDIIVEKAEEFLSKLGTARLVLVDLSRGSKILSLVKAKASQKNIDSAKFFTFVGDITKLRSEGGLHCNVIANATNWRLKPGGGGVNAAIFKAAGPDLETATRVRANTLLPGKAVVVPLPSTCPLHNAEGITHVIHVLGPNMNPNRPDNLNNDYTKGCKTLREAYTSLFEGFLSVVQDQSKLPKRSSQTAVSDSGEDIKEDSERNKKYKGSQDKAVTNNLESESLEDTRGSGKKMSKGWNTWALALHSIAMHPERHENVVLEYLDNIVVINDQYPKARKHVLVLARQESLDGLEDVRKENLQLLQEMHNVGLKWVDRFQNEDASLIFRLGYHSVPSMRQLHLHVISQDFNSDSLKNKKHWNSFTTSFFRDSVDVLEEVNSQGKANVASEDLLKGELRCNRCRSAHPNIPKLKSHVRSCHSQFPDHLLQNNRLVARAET.

Residues 1-57 are disordered; sequence MDDFNLRSENPNSSSTTSSSSSSFHRHKSETGNTKRSRSTSTLSTDPQSVAARDRRH. Over residues 13-23 the composition is skewed to low complexity; that stretch reads SSSTTSSSSSS. The bHLH domain occupies 43-92; it reads LSTDPQSVAARDRRHRISDRFKILQSMVPGGAKMDTVSMLDEAISYVKFL. 234–241 serves as a coordination point for ATP; the sequence is GPPGSGKS. The Macro domain maps to 511–690; it reads KAKASQKNID…KYKGSQDKAV (180 aa). Positions 657–666 are enriched in polar residues; it reads PKRSSQTAVS. The tract at residues 657–706 is disordered; the sequence is PKRSSQTAVSDSGEDIKEDSERNKKYKGSQDKAVTNNLESESLEDTRGSG. The HIT domain occupies 720-829; it reads LHSIAMHPER…SQDFNSDSLK (110 aa). The C2H2-type zinc finger occupies 870-893; that stretch reads LRCNRCRSAHPNIPKLKSHVRSCH.

Homodimer.

It is found in the nucleus. The sequence is that of Transcription factor bHLH140 (BHLH140) from Arabidopsis thaliana (Mouse-ear cress).